We begin with the raw amino-acid sequence, 323 residues long: tRNA-cytidine(32) 2-sulfurtransferase (323 aa).

The PP-loop motif signature appears at 49–54; that stretch reads SGGKDS. The [4Fe-4S] cluster site is built by Cys-124, Cys-127, and Cys-215.

The protein belongs to the TtcA family. In terms of assembly, homodimer. The cofactor is Mg(2+). [4Fe-4S] cluster serves as cofactor.

Its subcellular location is the cytoplasm. The enzyme catalyses cytidine(32) in tRNA + S-sulfanyl-L-cysteinyl-[cysteine desulfurase] + AH2 + ATP = 2-thiocytidine(32) in tRNA + L-cysteinyl-[cysteine desulfurase] + A + AMP + diphosphate + H(+). It participates in tRNA modification. Functionally, catalyzes the ATP-dependent 2-thiolation of cytidine in position 32 of tRNA, to form 2-thiocytidine (s(2)C32). The sulfur atoms are provided by the cysteine/cysteine desulfurase (IscS) system. The protein is tRNA-cytidine(32) 2-sulfurtransferase of Shewanella denitrificans (strain OS217 / ATCC BAA-1090 / DSM 15013).